The chain runs to 477 residues: Calcium uptake protein 1, mitochondrial (477 aa).

The transit peptide at 1–33 directs the protein to the mitochondrion; the sequence is MFRLNTLSALAELAVGSRWYHGASQPTQTKRRL. The segment at 57-107 is disordered; sequence AESPPCVNSKKPDTEDKERNKDSGEVSSREGRAADAAAEPYPEDKKKKRSG. Over residues 66 to 89 the composition is skewed to basic and acidic residues; sequence KKPDTEDKERNKDSGEVSSREGRA. Positions 101-112 are polybasic region; the sequence is KKKKRSGFRDRK. Phosphoserine; by PKB is present on Ser-124. Residues 128–131 form a k/R-ring region; it reads KIFR. One can recognise an EF-hand 1 domain in the interval 220–255; the sequence is TPQRNFEIAFKMFDLNGDGEVDMEEFEQVQSIIRSQ. Residues Asp-233, Asn-235, Asp-237, Glu-239, and Glu-244 each coordinate Ca(2+). The interval 261–265 is k/R-ring; sequence RHRDR. An EF-hand 2; degenerate domain is found at 356–376; sequence KDGKGLTFQEVENFFTFLKNI. The 36-residue stretch at 410–445 folds into the EF-hand 3 domain; that stretch reads LSDHVCDVVFALFDCDGNGELSNKEFVSIMKQRLMR. Residues Asp-423, Asp-425, Asn-427, Glu-429, and Glu-434 each contribute to the Ca(2+) site. Position 457 is an asymmetric dimethylarginine (Arg-457). A C-helix region region spans residues 457–467; sequence RLMQAMWKCAQ.

This sequence belongs to the MICU1 family. MICU1 subfamily. In terms of assembly, heterodimer; disulfide-linked; heterodimerizes with MICU2 or MICU3. Homodimer; disulfide-linked. Component of the uniplex complex, composed of MCU, EMRE/SMDT1, MICU1 and MICU2 (or MICU3) in a 4:4:1:1 stoichiometry. The composition of calcium sensors within the uniplex complex can differ depending on tissues: a MICU1 homodimer can be present instead of the MICU1-MICU2 heterodimer in skeletal-muscle and kidney. MICU1 is recruited to the uniplex complex by EMRE/SMDT1, and it associates with MCU at low calcium levels, occluding the pore of the MCU channel. Associates with the MICOS complex. Interacts with SLC25A23. Interacts with CHCHD4/MIA40; which introduces the interchain disulfide bond with MICU2. Interacts (when methylated) with UCP2; leading to decrease the calcium sensitivity of MICU1. As to quaternary structure, heterodimer; disulfide-linked; heterodimerizes with MICU2 or MICU3. Heterodimerizes with MICU3 in skeletal muscle. Component of the uniplex complex, composed of MCU, EMRE/SMDT1, MICU1 and MICU2 (or MICU3) in a 4:4:1:1 stoichiometry. Also localizes to mitochondrial cristae junctions. Phosphorylation at Ser-124 by AKT1 impairs its maturation and stability. Post-translationally, asymmetric dimethylation at Arg-457 by PRMT1 decreases the calcium sensitivity of MICU1 by promoting interaction with UCP2. In terms of processing, degraded by YME1L1 when not complexed as homodimer or heterodimer. Not degraded when complexed as homodimer or heterodimer; the presence of the interchain disulfide bond protecting MICU1 from degradation by YME1L1. In terms of tissue distribution, expressed in skeletal muscle, heart, kidney, liver, brain, lung, fat and spleen. Specifically expressed in the skeletal muscle.

It is found in the mitochondrion intermembrane space. The protein localises to the mitochondrion inner membrane. Functionally, calcium sensor of the mitochondrial calcium uniporter (MCU) channel, which senses calcium level via its EF-hand domains. MICU1 and MICU2 (or MICU3) form a disulfide-linked heterodimer that stimulates and inhibits MCU activity, depending on the concentration of calcium. At low calcium levels, MICU1 occludes the pore of the MCU channel, preventing mitochondrial calcium uptake. At higher calcium levels, calcium-binding to MICU1 and MICU2 (or MICU3) induces a conformational change that weakens MCU-MICU1 interactions and moves the MICU1-MICU2 heterodimer away from the pore, allowing calcium permeation through the MCU channel. Also required to protect against manganese toxicity by preventing manganese uptake by MCU: mechanistically, manganese-binding to its EF-hand domains does not induce any conformational change, maintaining MCU pore occlusion. Acts as a regulator of mitochondrial cristae structure independently of its ability to regulate the mitochondrial calcium uniporter channel. Regulates glucose-dependent insulin secretion in pancreatic beta-cells by regulating mitochondrial calcium uptake. Induces T-helper 1-mediated autoreactivity, which is accompanied by the release of IFNG. Isoform that regulates mitochondrial calcium uniporter (MCU) in the skeletal muscle. Compared to other isoforms, this isoform has higher affinity for calcium, promoting mitochondrial calcium uptake at lower calcium concentrations. This allows a rapid response of mitochondrial metabolism and ensures sustained ATP production needed for resistance and strenuous exercise. The chain is Calcium uptake protein 1, mitochondrial from Mus musculus (Mouse).